Here is a 135-residue protein sequence, read N- to C-terminus: Malate dehydrogenase (135 aa).

NAD(+) is bound by residues 7–12 (XAAGGI) and aspartate 25. Arginine 72 and arginine 78 together coordinate substrate. NAD(+) contacts are provided by residues asparagine 85 and 108-110 (ITN). Residue asparagine 110 coordinates substrate.

The protein belongs to the LDH/MDH superfamily. MDH type 1 family. In terms of assembly, homodimer.

The catalysed reaction is (S)-malate + NAD(+) = oxaloacetate + NADH + H(+). In terms of biological role, catalyzes the reversible oxidation of malate to oxaloacetate. The protein is Malate dehydrogenase (mdh) of Klebsiella pneumoniae.